A 283-amino-acid polypeptide reads, in one-letter code: MPELPEVETVRRGLAPAMEGAVIARAEVNRPDLRWPFPDRMAERLTGQRVERLRRRSKYILADLSGGETLLIHLGMSGRMTVSGDPLGQFVHDHPAAQKHDHVVFHMDNGARITFNDPRRFGAMDLMATATADEHKLLMVLGPEPLGNDFHEDYLVAALKGRNTPVKSALLDQGIVAGLGNIYVCEALFRAGVSPRRKAGQIAAARVSALVPIIRQVLSEAIEAGGSSLKDFRQADGELGYFQHSFDVYGREGEPCRRAGCDGTVQRITQSGRSSFYCAQCQR.

The active-site Schiff-base intermediate with DNA is the Pro-2. The active-site Proton donor is Glu-3. The Proton donor; for beta-elimination activity role is filled by Lys-58. DNA-binding residues include His-100, Arg-119, and Arg-162. The FPG-type zinc-finger motif lies at 247–283 (DVYGREGEPCRRAGCDGTVQRITQSGRSSFYCAQCQR). Arg-273 functions as the Proton donor; for delta-elimination activity in the catalytic mechanism.

The protein belongs to the FPG family. As to quaternary structure, monomer. Zn(2+) serves as cofactor.

It carries out the reaction Hydrolysis of DNA containing ring-opened 7-methylguanine residues, releasing 2,6-diamino-4-hydroxy-5-(N-methyl)formamidopyrimidine.. It catalyses the reaction 2'-deoxyribonucleotide-(2'-deoxyribose 5'-phosphate)-2'-deoxyribonucleotide-DNA = a 3'-end 2'-deoxyribonucleotide-(2,3-dehydro-2,3-deoxyribose 5'-phosphate)-DNA + a 5'-end 5'-phospho-2'-deoxyribonucleoside-DNA + H(+). Involved in base excision repair of DNA damaged by oxidation or by mutagenic agents. Acts as a DNA glycosylase that recognizes and removes damaged bases. Has a preference for oxidized purines, such as 7,8-dihydro-8-oxoguanine (8-oxoG). Has AP (apurinic/apyrimidinic) lyase activity and introduces nicks in the DNA strand. Cleaves the DNA backbone by beta-delta elimination to generate a single-strand break at the site of the removed base with both 3'- and 5'-phosphates. This Ruegeria pomeroyi (strain ATCC 700808 / DSM 15171 / DSS-3) (Silicibacter pomeroyi) protein is Formamidopyrimidine-DNA glycosylase.